Reading from the N-terminus, the 565-residue chain is CTP synthase (565 aa).

Residues 1 to 272 (MARPKNVKHI…DLRVMKKLGL (272 aa)) form an amidoligase domain region. Ser18 contributes to the CTP binding site. Ser18 lines the UTP pocket. An ATP-binding site is contributed by 19 to 24 (SLGKGI). Tyr59 contacts L-glutamine. Position 76 (Asp76) interacts with ATP. Mg(2+)-binding residues include Asp76 and Glu146. Residues 153–155 (DIE), 193–198 (KTKPTQ), and Lys229 contribute to the CTP site. Residues 193 to 198 (KTKPTQ) and Lys229 each bind UTP. One can recognise a Glutamine amidotransferase type-1 domain in the interval 299–543 (TIGICGKYTE…VHAAKEFAQG (245 aa)). Gly363 is an L-glutamine binding site. The Nucleophile; for glutamine hydrolysis role is filled by Cys390. L-glutamine contacts are provided by residues 391-394 (LGMQ), Glu414, and Arg471. Residues His516 and Glu518 contribute to the active site.

It belongs to the CTP synthase family. Homotetramer.

It carries out the reaction UTP + L-glutamine + ATP + H2O = CTP + L-glutamate + ADP + phosphate + 2 H(+). The catalysed reaction is L-glutamine + H2O = L-glutamate + NH4(+). The enzyme catalyses UTP + NH4(+) + ATP = CTP + ADP + phosphate + 2 H(+). The protein operates within pyrimidine metabolism; CTP biosynthesis via de novo pathway; CTP from UDP: step 2/2. Its activity is regulated as follows. Allosterically activated by GTP, when glutamine is the substrate; GTP has no effect on the reaction when ammonia is the substrate. The allosteric effector GTP functions by stabilizing the protein conformation that binds the tetrahedral intermediate(s) formed during glutamine hydrolysis. Inhibited by the product CTP, via allosteric rather than competitive inhibition. Its function is as follows. Catalyzes the ATP-dependent amination of UTP to CTP with either L-glutamine or ammonia as the source of nitrogen. Regulates intracellular CTP levels through interactions with the four ribonucleotide triphosphates. In Chlorobaculum tepidum (strain ATCC 49652 / DSM 12025 / NBRC 103806 / TLS) (Chlorobium tepidum), this protein is CTP synthase.